The chain runs to 466 residues: Asparagine--tRNA ligase (466 aa).

It belongs to the class-II aminoacyl-tRNA synthetase family. In terms of assembly, homodimer.

Its subcellular location is the cytoplasm. The enzyme catalyses tRNA(Asn) + L-asparagine + ATP = L-asparaginyl-tRNA(Asn) + AMP + diphosphate + H(+). This chain is Asparagine--tRNA ligase, found in Shewanella frigidimarina (strain NCIMB 400).